The following is a 156-amino-acid chain: Ribosome maturation factor RimP (156 aa).

This sequence belongs to the RimP family.

The protein localises to the cytoplasm. Functionally, required for maturation of 30S ribosomal subunits. The protein is Ribosome maturation factor RimP of Oenococcus oeni (strain ATCC BAA-331 / PSU-1).